A 281-amino-acid polypeptide reads, in one-letter code: Protein synthesis inhibitor I (281 aa).

Ala2 carries the N-acetylalanine modification. Residue Glu175 is part of the active site.

This sequence belongs to the ribosome-inactivating protein family. Type 1 RIP subfamily.

The protein localises to the cytoplasm. The enzyme catalyses Endohydrolysis of the N-glycosidic bond at one specific adenosine on the 28S rRNA.. Its function is as follows. Inhibits the elongation phase of protein synthesis. It inactivates fungal ribosomes even more effectively than mammalian ribosomes and is thought to function as a constitutive antifungal agent in plants. This is Protein synthesis inhibitor I (RIP30) from Hordeum vulgare (Barley).